The chain runs to 134 residues: ATP synthase epsilon chain (134 aa).

Belongs to the ATPase epsilon chain family. As to quaternary structure, F-type ATPases have 2 components, CF(1) - the catalytic core - and CF(0) - the membrane proton channel. CF(1) has five subunits: alpha(3), beta(3), gamma(1), delta(1), epsilon(1). CF(0) has three main subunits: a, b and c.

Its subcellular location is the cell membrane. In terms of biological role, produces ATP from ADP in the presence of a proton gradient across the membrane. This is ATP synthase epsilon chain from Listeria monocytogenes serotype 4b (strain F2365).